The primary structure comprises 261 residues: Src-like-adapter 2 (261 aa).

Basic residues predominate over residues 1–10; that stretch reads MGSLPSRRKS. The tract at residues 1-31 is disordered; sequence MGSLPSRRKSLPSPSLSSSVQGQGPVTMEAE. Residue Gly-2 is the site of N-myristoyl glycine attachment. The region spanning 32-92 is the SH3 domain; it reads RSKATAVALG…PSVHVAKVSH (61 aa). One can recognise an SH2 domain in the interval 94–191; that stretch reads WLYEGLSREK…DICCLLKEPC (98 aa). An SLA C-terminal region spans residues 195–261; it reads RAGPLPGKDI…NDEAVSLDDA (67 aa).

Interacts (via SH2 domain) with ZAP70 (phosphorylated) and CD3Z (phosphorylated). Interacts (via SH2 domain) with CSF1R (phosphorylated). Interacts (via its C-terminal domain) with CBL (phosphorylated). In terms of processing, phosphorylated by CSF1R. In terms of tissue distribution, predominantly expressed in immune system, with highest levels in peripheral blood leukocytes. Expressed in spleen, thymus and lymph nodes. Expressed in T-cells as well as in monocytes, and at low level in B-cells. Also detected in placenta, prostate, skin, retina and colon.

The protein resides in the cytoplasm. Its subcellular location is the cell membrane. The protein localises to the cytoplasmic vesicle. Its function is as follows. Adapter protein, which negatively regulates T-cell receptor (TCR) signaling. Inhibits T-cell antigen-receptor induced activation of nuclear factor of activated T-cells. May act by linking signaling proteins such as ZAP70 with CBL, leading to a CBL dependent degradation of signaling proteins. This chain is Src-like-adapter 2 (SLA2), found in Homo sapiens (Human).